Here is a 172-residue protein sequence, read N- to C-terminus: S-ribosylhomocysteine lyase (172 aa).

Fe cation-binding residues include histidine 54, histidine 58, and cysteine 128.

It belongs to the LuxS family. Homodimer. Fe cation serves as cofactor.

It carries out the reaction S-(5-deoxy-D-ribos-5-yl)-L-homocysteine = (S)-4,5-dihydroxypentane-2,3-dione + L-homocysteine. Involved in the synthesis of autoinducer 2 (AI-2) which is secreted by bacteria and is used to communicate both the cell density and the metabolic potential of the environment. The regulation of gene expression in response to changes in cell density is called quorum sensing. Catalyzes the transformation of S-ribosylhomocysteine (RHC) to homocysteine (HC) and 4,5-dihydroxy-2,3-pentadione (DPD). This is S-ribosylhomocysteine lyase from Aliivibrio salmonicida (strain LFI1238) (Vibrio salmonicida (strain LFI1238)).